The primary structure comprises 406 residues: MGMESSPESPQPVRVVLQAVGGWIGRLGRIWIEGQVAELHRRGGMAYITLRDPVANVSARVTCSIRVLRAADPPPEQGARVVVYAKPDFYVPRGTFSFQALEIRHVGLGELLARLERLRQALAAEGLFAESRKRKLPFLPGVVGLICGRDSAAERDVLENARRRWPAVRFEVREVAVQGDRAVPEVMAALEELDAHPEVDVIIIARGGGSLEDLLPFSDEALVRAVAAARTPVVSAIGHEQDTPLLDYVADLRASTPTDAAKKVVPDVGEQWELIRQLRDRARRVLEGGIAREEAWLASMRSRPVLANPVQEVERKIEQVFDLRDRGRRALTAALDRAGDNLAHIRARLHALSPATTLARGYAIVRRADGTVVRSAAEVAPGEELRLRFAEDGLVAIAQNREEDEL.

This sequence belongs to the XseA family. Heterooligomer composed of large and small subunits.

The protein resides in the cytoplasm. It catalyses the reaction Exonucleolytic cleavage in either 5'- to 3'- or 3'- to 5'-direction to yield nucleoside 5'-phosphates.. Its function is as follows. Bidirectionally degrades single-stranded DNA into large acid-insoluble oligonucleotides, which are then degraded further into small acid-soluble oligonucleotides. This chain is Exodeoxyribonuclease 7 large subunit, found in Thermobifida fusca (strain YX).